Reading from the N-terminus, the 235-residue chain is Protein FEV (235 aa).

Residues 58 to 138 constitute a DNA-binding region (ETS); that stretch reads IQLWQFLLEL…HGKRYAYKFD (81 aa).

Belongs to the ETS family. In terms of tissue distribution, expressed by serotonergic neurons in anterior and posterior raphe.

The protein localises to the nucleus. Functions as a transcriptional regulator. Functions in the differentiation and the maintenance of the central serotonergic neurons. May play a role in cell growth. The chain is Protein FEV (fev) from Danio rerio (Zebrafish).